Consider the following 309-residue polypeptide: Glutaminase (309 aa).

Residues serine 64, asparagine 114, glutamate 160, asparagine 167, tyrosine 191, tyrosine 243, and valine 261 each coordinate substrate.

Belongs to the glutaminase family. In terms of assembly, homotetramer.

It carries out the reaction L-glutamine + H2O = L-glutamate + NH4(+). The chain is Glutaminase from Rhizobium etli (strain CIAT 652).